The following is a 206-amino-acid chain: Large ribosomal subunit protein eL8 (206 aa).

The protein belongs to the eukaryotic ribosomal protein eL8 family. Component of the large ribosomal subunit.

The protein resides in the cytoplasm. The polypeptide is Large ribosomal subunit protein eL8 (RPL7A) (Encephalitozoon cuniculi (strain GB-M1) (Microsporidian parasite)).